A 1053-amino-acid chain; its full sequence is Middle cell wall protein (1053 aa).

The N-terminal stretch at 1–23 is a signal peptide; that stretch reads MKKVVNSVLASALALTVAPMAFA. SLH domains are found at residues 26–89, 90–153, and 154–203; these read EAAT…KLAQ, FSNT…KGVW, and PNSM…FGTD.

As to quaternary structure, the middle cell wall layer is composed of subunits of the middle cell wall protein. These proteins form a hexagonal array with a lattice constant of 14.5 nM in the middle cell wall layers.

The protein resides in the secreted. Its subcellular location is the cell wall. It localises to the S-layer. In terms of biological role, the middle wall protein binds to peptidoglycan and to the outer cell wall protein. The protein is Middle cell wall protein of Brevibacillus brevis (strain 47 / JCM 6285 / NBRC 100599).